Reading from the N-terminus, the 193-residue chain is Ribosome maturation factor RimM (193 aa).

A PRC barrel domain is found at 100–173 (DDEFYYADLE…TLLIDPLAAG (74 aa)).

It belongs to the RimM family. Binds ribosomal protein uS19.

It is found in the cytoplasm. An accessory protein needed during the final step in the assembly of 30S ribosomal subunit, possibly for assembly of the head region. Essential for efficient processing of 16S rRNA. May be needed both before and after RbfA during the maturation of 16S rRNA. It has affinity for free ribosomal 30S subunits but not for 70S ribosomes. The sequence is that of Ribosome maturation factor RimM from Rhizobium etli (strain CIAT 652).